The sequence spans 870 residues: Ribonucleoside-diphosphate reductase large subunit (870 aa).

One can recognise an ATP-cone domain in the interval Met16–Lys110. Residues Lys20–Arg21, Glu26–Lys32, Thr71, and Asp75 each bind ATP. Residue Ser235 participates in GDP binding. Cysteines 236 and 463 form a disulfide. Residues Asp244–Ile246, Lys261, Arg274, and Arg281–Gly282 contribute to the dTTP site. Asn446 lines the GDP pocket. The Proton acceptor role is filled by Asn446. Cys448 acts as the Cysteine radical intermediate in catalysis. GDP contacts are provided by residues Glu450 and Thr632–Thr635. The Proton acceptor role is filled by Glu450. The interval Lys789–Tyr854 is disordered. A compositionally biased stretch (low complexity) spans Asn796–Ser811. A compositionally biased stretch (polar residues) spans Asn812 to Thr831. Residues Gln832–Gln844 are compositionally biased toward low complexity.

This sequence belongs to the ribonucleoside diphosphate reductase large chain family. As to quaternary structure, heterodimer of a large and a small subunit.

The protein localises to the cytoplasm. It carries out the reaction a 2'-deoxyribonucleoside 5'-diphosphate + [thioredoxin]-disulfide + H2O = a ribonucleoside 5'-diphosphate + [thioredoxin]-dithiol. Its activity is regulated as follows. Under complex allosteric control mediated by deoxynucleoside triphosphates and ATP binding to separate specificity and activation sites on the large subunit. The type of nucleotide bound at the specificity site determines substrate preference. It seems probable that ATP makes the enzyme reduce CDP and UDP, dGTP favors ADP reduction and dTTP favors GDP reduction. Stimulated by ATP and inhibited by dATP binding to the activity site. In terms of biological role, provides the precursors necessary for DNA synthesis. Catalyzes the biosynthesis of deoxyribonucleotides from the corresponding ribonucleotides. This is Ribonucleoside-diphosphate reductase large subunit (rnrA) from Dictyostelium discoideum (Social amoeba).